Consider the following 262-residue polypeptide: Phosphatidylglycerol--prolipoprotein diacylglyceryl transferase (262 aa).

Transmembrane regions (helical) follow at residues 9 to 29 (LGPL…ILAV), 41 to 61 (IIPD…ILGA), 80 to 100 (IFAI…GALV), and 109 to 129 (LINT…AQSL). Residue Arg131 participates in a 1,2-diacyl-sn-glycero-3-phospho-(1'-sn-glycerol) binding. Helical transmembrane passes span 167-187 (QPTF…ILIF), 197-217 (GHIT…IEGM), and 226-246 (GLRV…MIVI).

It belongs to the Lgt family.

Its subcellular location is the cell membrane. It carries out the reaction L-cysteinyl-[prolipoprotein] + a 1,2-diacyl-sn-glycero-3-phospho-(1'-sn-glycerol) = an S-1,2-diacyl-sn-glyceryl-L-cysteinyl-[prolipoprotein] + sn-glycerol 1-phosphate + H(+). Its pathway is protein modification; lipoprotein biosynthesis (diacylglyceryl transfer). Its function is as follows. Catalyzes the transfer of the diacylglyceryl group from phosphatidylglycerol to the sulfhydryl group of the N-terminal cysteine of a prolipoprotein, the first step in the formation of mature lipoproteins. This Streptococcus pneumoniae (strain ATCC 700669 / Spain 23F-1) protein is Phosphatidylglycerol--prolipoprotein diacylglyceryl transferase.